Here is a 508-residue protein sequence, read N- to C-terminus: Maturase K (508 aa).

The protein belongs to the intron maturase 2 family. MatK subfamily.

It is found in the plastid. The protein resides in the chloroplast. Functionally, usually encoded in the trnK tRNA gene intron. Probably assists in splicing its own and other chloroplast group II introns. The polypeptide is Maturase K (Pelargonium hortorum (Common geranium)).